Reading from the N-terminus, the 214-residue chain is Probable transaldolase (214 aa).

The active-site Schiff-base intermediate with substrate is Lys-83.

Belongs to the transaldolase family. Type 3B subfamily.

Its subcellular location is the cytoplasm. The catalysed reaction is D-sedoheptulose 7-phosphate + D-glyceraldehyde 3-phosphate = D-erythrose 4-phosphate + beta-D-fructose 6-phosphate. Its pathway is carbohydrate degradation; pentose phosphate pathway; D-glyceraldehyde 3-phosphate and beta-D-fructose 6-phosphate from D-ribose 5-phosphate and D-xylulose 5-phosphate (non-oxidative stage): step 2/3. Transaldolase is important for the balance of metabolites in the pentose-phosphate pathway. The sequence is that of Probable transaldolase from Desulfotalea psychrophila (strain LSv54 / DSM 12343).